We begin with the raw amino-acid sequence, 265 residues long: uncharacterized protein (265 aa).

Residues 143 to 205 (ATQKALKDSI…EKLIKSVEKA (63 aa)) are a coiled coil.

This is an uncharacterized protein from Aquifex aeolicus (strain VF5).